The sequence spans 558 residues: Dihydroxy-acid dehydratase (558 aa).

A [2Fe-2S] cluster-binding site is contributed by C48. D80 is a binding site for Mg(2+). Position 121 (C121) interacts with [2Fe-2S] cluster. The Mg(2+) site is built by D122 and K123. N6-carboxylysine is present on K123. C193 provides a ligand contact to [2Fe-2S] cluster. Residue E445 participates in Mg(2+) binding. S471 (proton acceptor) is an active-site residue.

Belongs to the IlvD/Edd family. As to quaternary structure, homodimer. It depends on [2Fe-2S] cluster as a cofactor. Mg(2+) serves as cofactor.

It catalyses the reaction (2R)-2,3-dihydroxy-3-methylbutanoate = 3-methyl-2-oxobutanoate + H2O. It carries out the reaction (2R,3R)-2,3-dihydroxy-3-methylpentanoate = (S)-3-methyl-2-oxopentanoate + H2O. It functions in the pathway amino-acid biosynthesis; L-isoleucine biosynthesis; L-isoleucine from 2-oxobutanoate: step 3/4. It participates in amino-acid biosynthesis; L-valine biosynthesis; L-valine from pyruvate: step 3/4. Functionally, functions in the biosynthesis of branched-chain amino acids. Catalyzes the dehydration of (2R,3R)-2,3-dihydroxy-3-methylpentanoate (2,3-dihydroxy-3-methylvalerate) into 2-oxo-3-methylpentanoate (2-oxo-3-methylvalerate) and of (2R)-2,3-dihydroxy-3-methylbutanoate (2,3-dihydroxyisovalerate) into 2-oxo-3-methylbutanoate (2-oxoisovalerate), the penultimate precursor to L-isoleucine and L-valine, respectively. The chain is Dihydroxy-acid dehydratase from Prochlorococcus marinus (strain SARG / CCMP1375 / SS120).